Here is a 66-residue protein sequence, read N- to C-terminus: Large ribosomal subunit protein bL33c (66 aa).

The protein belongs to the bacterial ribosomal protein bL33 family.

Its subcellular location is the plastid. It localises to the chloroplast. The sequence is that of Large ribosomal subunit protein bL33c from Populus alba (White poplar).